The following is a 115-amino-acid chain: Large ribosomal subunit protein bL20 (115 aa).

It belongs to the bacterial ribosomal protein bL20 family.

Functionally, binds directly to 23S ribosomal RNA and is necessary for the in vitro assembly process of the 50S ribosomal subunit. It is not involved in the protein synthesizing functions of that subunit. This is Large ribosomal subunit protein bL20 from Parasynechococcus marenigrum (strain WH8102).